A 256-amino-acid chain; its full sequence is Deoxyribose-phosphate aldolase (256 aa).

The Proton donor/acceptor role is filled by Asp102. Lys165 acts as the Schiff-base intermediate with acetaldehyde in catalysis. The active-site Proton donor/acceptor is Lys197.

It belongs to the DeoC/FbaB aldolase family. DeoC type 2 subfamily.

Its subcellular location is the cytoplasm. It catalyses the reaction 2-deoxy-D-ribose 5-phosphate = D-glyceraldehyde 3-phosphate + acetaldehyde. The protein operates within carbohydrate degradation; 2-deoxy-D-ribose 1-phosphate degradation; D-glyceraldehyde 3-phosphate and acetaldehyde from 2-deoxy-alpha-D-ribose 1-phosphate: step 2/2. Its function is as follows. Catalyzes a reversible aldol reaction between acetaldehyde and D-glyceraldehyde 3-phosphate to generate 2-deoxy-D-ribose 5-phosphate. The polypeptide is Deoxyribose-phosphate aldolase (Shewanella oneidensis (strain ATCC 700550 / JCM 31522 / CIP 106686 / LMG 19005 / NCIMB 14063 / MR-1)).